Consider the following 310-residue polypeptide: Thioredoxin reductase (310 aa).

34-41 (NGMQPGGQ) is an FAD binding site. An intrachain disulfide couples Cys135 to Cys138. 281 to 290 (DVQDKIYRQA) contributes to the FAD binding site.

It belongs to the class-II pyridine nucleotide-disulfide oxidoreductase family. As to quaternary structure, homodimer. FAD is required as a cofactor.

The protein resides in the cytoplasm. The enzyme catalyses [thioredoxin]-dithiol + NADP(+) = [thioredoxin]-disulfide + NADPH + H(+). The protein is Thioredoxin reductase (trxB) of Rickettsia typhi (strain ATCC VR-144 / Wilmington).